A 283-amino-acid chain; its full sequence is DNA repair protein RecO (283 aa).

A compositionally biased stretch (polar residues) spans 254–264 (SSPASVGSSAT). The interval 254–283 (SSPASVGSSATRYFAQGDTDENDRDPPGAR) is disordered.

The protein belongs to the RecO family.

In terms of biological role, involved in DNA repair and RecF pathway recombination. The protein is DNA repair protein RecO of Roseiflexus sp. (strain RS-1).